A 98-amino-acid polypeptide reads, in one-letter code: NADH-ubiquinone oxidoreductase chain 4L (98 aa).

3 helical membrane-spanning segments follow: residues 1–21 (MSPIFINITLAFTISLLGMLV), 26–46 (LMASLLCLEGMMMSLFITIAL), and 61–81 (ITLLVFAACETAVGLALLVSI).

This sequence belongs to the complex I subunit 4L family. As to quaternary structure, core subunit of respiratory chain NADH dehydrogenase (Complex I) which is composed of 45 different subunits.

The protein resides in the mitochondrion inner membrane. It catalyses the reaction a ubiquinone + NADH + 5 H(+)(in) = a ubiquinol + NAD(+) + 4 H(+)(out). In terms of biological role, core subunit of the mitochondrial membrane respiratory chain NADH dehydrogenase (Complex I) which catalyzes electron transfer from NADH through the respiratory chain, using ubiquinone as an electron acceptor. Part of the enzyme membrane arm which is embedded in the lipid bilayer and involved in proton translocation. The protein is NADH-ubiquinone oxidoreductase chain 4L (MT-ND4L) of Chlorocebus aethiops (Green monkey).